Consider the following 145-residue polypeptide: Large ribosomal subunit protein uL16 (145 aa).

Belongs to the universal ribosomal protein uL16 family. Part of the 50S ribosomal subunit.

Binds 23S rRNA and is also seen to make contacts with the A and possibly P site tRNAs. The polypeptide is Large ribosomal subunit protein uL16 (Exiguobacterium sp. (strain ATCC BAA-1283 / AT1b)).